The primary structure comprises 168 residues: Photosystem I assembly protein Ycf3 (168 aa).

TPR repeat units lie at residues 35–68 (AFTYYRDGMSAQSEGNYAEALQNYYEATRPEIDP), 72–105 (SYILYNIGLIHTSNGEHTKALEYYFRALERNPFL), and 120–153 (GEQAILQGDSEIAEAWFDQAAEYWKQAIALTPGN).

It belongs to the Ycf3 family.

The protein localises to the plastid. The protein resides in the chloroplast thylakoid membrane. Its function is as follows. Essential for the assembly of the photosystem I (PSI) complex. May act as a chaperone-like factor to guide the assembly of the PSI subunits. The chain is Photosystem I assembly protein Ycf3 from Phalaenopsis aphrodite subsp. formosana (Moth orchid).